The primary structure comprises 471 residues: Ribulose bisphosphate carboxylase large chain (471 aa).

Residues asparagine 115 and threonine 165 each coordinate substrate. The active-site Proton acceptor is the lysine 167. Residue lysine 169 coordinates substrate. Lysine 193, aspartate 195, and glutamate 196 together coordinate Mg(2+). Lysine 193 carries the N6-carboxylysine modification. The active-site Proton acceptor is histidine 286. Residues arginine 287, histidine 319, and serine 371 each coordinate substrate.

Belongs to the RuBisCO large chain family. Type I subfamily. In terms of assembly, heterohexadecamer of 8 large chains and 8 small chains. The cofactor is Mg(2+).

The protein localises to the carboxysome. It carries out the reaction 2 (2R)-3-phosphoglycerate + 2 H(+) = D-ribulose 1,5-bisphosphate + CO2 + H2O. It catalyses the reaction D-ribulose 1,5-bisphosphate + O2 = 2-phosphoglycolate + (2R)-3-phosphoglycerate + 2 H(+). Functionally, ruBisCO catalyzes two reactions: the carboxylation of D-ribulose 1,5-bisphosphate, the primary event in carbon dioxide fixation, as well as the oxidative fragmentation of the pentose substrate in the photorespiration process. Both reactions occur simultaneously and in competition at the same active site. In Prochlorococcus marinus (strain MIT 9301), this protein is Ribulose bisphosphate carboxylase large chain.